The sequence spans 445 residues: Allantoinase (445 aa).

Positions 63, 65, 150, 186, 238, and 311 each coordinate Zn(2+). Lys-150 carries the post-translational modification N6-carboxylysine.

Belongs to the metallo-dependent hydrolases superfamily. Allantoinase family. As to quaternary structure, homotetramer. Zn(2+) serves as cofactor. Carboxylation allows a single lysine to coordinate two zinc ions.

It carries out the reaction (S)-allantoin + H2O = allantoate + H(+). The protein operates within nitrogen metabolism; (S)-allantoin degradation; allantoate from (S)-allantoin: step 1/1. Catalyzes the conversion of allantoin (5-ureidohydantoin) to allantoic acid by hydrolytic cleavage of the five-member hydantoin ring. The sequence is that of Allantoinase from Streptomyces avermitilis (strain ATCC 31267 / DSM 46492 / JCM 5070 / NBRC 14893 / NCIMB 12804 / NRRL 8165 / MA-4680).